The chain runs to 531 residues: Transactivator/viroplasmin protein (531 aa).

2 disordered regions span residues 80–101 and 505–531; these read ASGKKPIAEGVSATSPEQTATG and CKSESSGPQTSEEGLQESEDEDFSVLV. Composition is skewed to polar residues over residues 91–100 and 505–517; these read SATSPEQTAT and CKSESSGPQTSEE. The span at 518 to 531 shows a compositional bias: acidic residues; it reads GLQESEDEDFSVLV.

Belongs to the caulimoviridae viroplasmin family.

Its subcellular location is the host cytoplasm. Enhances the translation of downstream ORFs on polycistronic mRNAs. This is Transactivator/viroplasmin protein from Cestrum yellow leaf curling virus (CmYLCV).